We begin with the raw amino-acid sequence, 154 residues long: Ribosomal RNA large subunit methyltransferase H (154 aa).

Residues leucine 70, glycine 102, and 121–126 contribute to the S-adenosyl-L-methionine site; that span reads LSRMTL.

This sequence belongs to the RNA methyltransferase RlmH family. Homodimer.

Its subcellular location is the cytoplasm. The enzyme catalyses pseudouridine(1915) in 23S rRNA + S-adenosyl-L-methionine = N(3)-methylpseudouridine(1915) in 23S rRNA + S-adenosyl-L-homocysteine + H(+). Specifically methylates the pseudouridine at position 1915 (m3Psi1915) in 23S rRNA. This Citrifermentans bemidjiense (strain ATCC BAA-1014 / DSM 16622 / JCM 12645 / Bem) (Geobacter bemidjiensis) protein is Ribosomal RNA large subunit methyltransferase H.